A 202-amino-acid chain; its full sequence is Peptidyl-tRNA hydrolase (202 aa).

A tRNA-binding site is contributed by tyrosine 14. The Proton acceptor role is filled by histidine 19. Tyrosine 64, asparagine 66, and asparagine 112 together coordinate tRNA.

The protein belongs to the PTH family. As to quaternary structure, monomer.

The protein resides in the cytoplasm. It carries out the reaction an N-acyl-L-alpha-aminoacyl-tRNA + H2O = an N-acyl-L-amino acid + a tRNA + H(+). Hydrolyzes ribosome-free peptidyl-tRNAs (with 1 or more amino acids incorporated), which drop off the ribosome during protein synthesis, or as a result of ribosome stalling. Its function is as follows. Catalyzes the release of premature peptidyl moieties from peptidyl-tRNA molecules trapped in stalled 50S ribosomal subunits, and thus maintains levels of free tRNAs and 50S ribosomes. In Nitrobacter winogradskyi (strain ATCC 25391 / DSM 10237 / CIP 104748 / NCIMB 11846 / Nb-255), this protein is Peptidyl-tRNA hydrolase.